The primary structure comprises 532 residues: uncharacterized protein (532 aa).

A run of 6 helical transmembrane segments spans residues histidine 7–isoleucine 26, glycine 30–isoleucine 52, phenylalanine 59–phenylalanine 77, leucine 87–phenylalanine 109, valine 116–isoleucine 134, and serine 139–valine 161. 2 consecutive RCK C-terminal domains span residues leucine 179 to glutamate 262 and arginine 263 to asparagine 346. Helical transmembrane passes span phenylalanine 356 to glycine 378, glycine 388 to methionine 410, glycine 446 to glycine 468, and tyrosine 509 to valine 531.

This sequence belongs to the AAE transporter (TC 2.A.81) family.

Its subcellular location is the cell membrane. This is an uncharacterized protein from Bacteroides fragilis (strain YCH46).